Reading from the N-terminus, the 281-residue chain is MNPPESSPLGKASACVDQYDATLLFPIARADQRAELGISGAAPFFGADLWTAFELSWLNQRGKPQVALAHITVPCETPRIVESKSFKLYLNSFSNTRFADAAQVQARIRADVSAAVWRGAASAGSVGVTLLGPDRFAQELMQELDGLSLDRLDVQCTQYQPAPELLSAQHDAAPVSERLTSQLLKSNCPVTGQPDWASVQIAYRGPPIDQEGLLQYLVSFRNHSGFHEQCVERIFMDLWTRCQPIELTVYARYTRRGGLDINPLRTSHPQGLPRNMRTARQ.

Substrate is bound at residue 81–83; that stretch reads VES. 83–84 serves as a coordination point for NADPH; it reads SK. The active-site Thioimide intermediate is the cysteine 188. Aspartate 195 functions as the Proton donor in the catalytic mechanism. 227 to 228 is a binding site for substrate; sequence HE. NADPH is bound at residue 256-257; the sequence is RG. A disordered region spans residues 261–281; that stretch reads INPLRTSHPQGLPRNMRTARQ.

The protein belongs to the GTP cyclohydrolase I family. QueF type 2 subfamily. In terms of assembly, homodimer.

The protein resides in the cytoplasm. The enzyme catalyses 7-aminomethyl-7-carbaguanine + 2 NADP(+) = 7-cyano-7-deazaguanine + 2 NADPH + 3 H(+). It functions in the pathway tRNA modification; tRNA-queuosine biosynthesis. Catalyzes the NADPH-dependent reduction of 7-cyano-7-deazaguanine (preQ0) to 7-aminomethyl-7-deazaguanine (preQ1). This is NADPH-dependent 7-cyano-7-deazaguanine reductase from Verminephrobacter eiseniae (strain EF01-2).